The primary structure comprises 362 residues: Probable endopolygalacturonase B (362 aa).

A signal peptide spans 1 to 20; that stretch reads MHFLQNAVVAATMGAALAAA. The propeptide occupies 21–25; the sequence is APLEK. A disulfide bridge connects residues Cys28 and Cys43. PbH1 repeat units lie at residues 155–184, 185–206, 207–227, 236–257, 265–287, and 299–344; these read ADHL…DIGQ, STYI…AINS, GEHI…SIGS, VNDV…RIKT, VENV…VVEQ, and TNGV…DVTG. Residue Asp199 is the Proton donor of the active site. Cys201 and Cys217 are joined by a disulfide. His221 is an active-site residue. An intrachain disulfide couples Cys327 to Cys332. Asn334 is a glycosylation site (N-linked (GlcNAc...) asparagine). Cys351 and Cys360 are oxidised to a cystine.

It belongs to the glycosyl hydrolase 28 family.

It is found in the secreted. It carries out the reaction (1,4-alpha-D-galacturonosyl)n+m + H2O = (1,4-alpha-D-galacturonosyl)n + (1,4-alpha-D-galacturonosyl)m.. In terms of biological role, involved in maceration and soft-rotting of plant tissue. Hydrolyzes the 1,4-alpha glycosidic bonds of de-esterified pectate in the smooth region of the plant cell wall. The sequence is that of Probable endopolygalacturonase B (pgaB) from Aspergillus niger (strain ATCC MYA-4892 / CBS 513.88 / FGSC A1513).